The sequence spans 471 residues: MGFLWTGSWILVLVLNSGPIQAFPKPEGSQDKSLHNRELSAERPLNEQIAEAEADKIKKAFPSESKPSESNYSSVDNLNLLRAITEKETVEKERQSIRSPPFDNQLNVEDADSTKNRKLIDEYDSTKSGLDHKFQDDPDGLHQLDGTPLTAEDIVHKIATRIYEENDRGVFDKIVSKLLNLGLITESQAHTLEDEVAEALQKLISKEANNYEETLDKPTSRTENQDGKIPEKVTPVAAVQDGFTNRENDETVSNTLTLSNGLERRTNPHREDDFEELQYFPNFYALLTSIDSEKEAKEKETLITIMKTLIDFVKMMVKYGTISPEEGVSYLENLDETIALQTKNKLEKNTTDSKSKLFPAPPEKSQEETDSTKEEAAKMEKEYGSLKDSTKDDNSNLGGKTDEATGKTEAYLEAIRKNIEWLKKHNKKGNKEDYDLSKMRDFINQQADAYVEKGILDKEEANAIKRIYSSL.

Residues 1 to 22 form the signal peptide; it reads MGFLWTGSWILVLVLNSGPIQA. Disordered stretches follow at residues 24–45, 89–108, and 345–404; these read PKPE…ERPL, TVEK…QLNV, and KLEK…TDEA. The span at 28–45 shows a compositional bias: basic and acidic residues; that stretch reads GSQDKSLHNRELSAERPL. The residue at position 40 (Ser40) is a Phosphoserine. A glycan (O-linked (Xyl...) (chondroitin sulfate) serine) is linked at Ser40. Basic and acidic residues-rich tracts occupy residues 345–355 and 364–404; these read KLEKNTTDSKS and KSQE…TDEA. Ser365 is modified (phosphoserine).

Interacts with CHGA. Interacts with secretogranin II/SCG2. Interacts (via C-terminus) with CPE. As to expression, expressed in various brain areas, with highest levels in the arcuate nucleus and the lateral hypothalamic area, as well as the paraventricular nucleus and the ventromedial hypothalamus (at protein level).

It is found in the cytoplasmic vesicle. It localises to the secretory vesicle. The protein localises to the secretory vesicle membrane. Its subcellular location is the secreted. In terms of biological role, member of the granin protein family that regulates the biogenesis of secretory granules. Acts as a sorting receptor for intragranular proteins including chromogranin A/CHGA. May also play a role in angiogenesis. Promotes endothelial proliferation, migration and tube formation through MEK/ERK signaling pathway. The chain is Secretogranin-3 (Scg3) from Mus musculus (Mouse).